The following is a 401-amino-acid chain: E3 ubiquitin-protein ligase RGLG4 (401 aa).

Residues 1-43 (MTMGNFLKRFGSGKSRSSRNMTLGTTSSQSHEPSPSDPSLSLA) form a disordered region. Low complexity predominate over residues 8–19 (KRFGSGKSRSSR). Residues 20–32 (NMTLGTTSSQSHE) are compositionally biased toward polar residues. Residues 79–299 (NLILGVDFTK…KETAFALAAL (221 aa)) form the VWFA domain. Positions 326–350 (VPRPPPIPYTPPTNAELPSTASPAS) are disordered. The span at 327–336 (PRPPPIPYTP) shows a compositional bias: pro residues. Positions 341–350 (ELPSTASPAS) are enriched in polar residues. The RING-type zinc finger occupies 357–390 (CPICLTNRKDVAFSCGHMTCGDCGSKISNCPICR).

As to quaternary structure, interacts with UBC30, GRXS17 and GLB3. In terms of tissue distribution, widely expressed.

Its subcellular location is the cytoplasm. It localises to the nucleus. It carries out the reaction S-ubiquitinyl-[E2 ubiquitin-conjugating enzyme]-L-cysteine + [acceptor protein]-L-lysine = [E2 ubiquitin-conjugating enzyme]-L-cysteine + N(6)-ubiquitinyl-[acceptor protein]-L-lysine.. Functionally, possesses E3 ubiquitin-protein ligase in vitro. Acts as upstream modulator of jasmonate (JA) signaling in response to various stimuli, such as JA-inhibited root growth, JA-inductive gene expression, coronatine-mediated pathogen susceptibility, wound-stimulated expression of JA-responsive genes and wound-induced JA biosynthesis. Controls fumonisin B1 (FB1)-triggered programmed cell death (PCD) by modulating the JA signaling pathway. May mediate salicylic acid (SA) suppression of JA signaling in FB1-induced responses. May mediate the formation of 'Lys-48'-linked multiubiquitin chains. Mediates the polyubiquitination and subsequent proteasomal degradation of the target protein GRXS17. The protein is E3 ubiquitin-protein ligase RGLG4 of Arabidopsis thaliana (Mouse-ear cress).